A 334-amino-acid polypeptide reads, in one-letter code: N-acetyl-gamma-glutamyl-phosphate reductase (334 aa).

Residue C154 is part of the active site.

Belongs to the NAGSA dehydrogenase family. Type 1 subfamily.

It is found in the cytoplasm. The enzyme catalyses N-acetyl-L-glutamate 5-semialdehyde + phosphate + NADP(+) = N-acetyl-L-glutamyl 5-phosphate + NADPH + H(+). It functions in the pathway amino-acid biosynthesis; L-arginine biosynthesis; N(2)-acetyl-L-ornithine from L-glutamate: step 3/4. Functionally, catalyzes the NADPH-dependent reduction of N-acetyl-5-glutamyl phosphate to yield N-acetyl-L-glutamate 5-semialdehyde. The polypeptide is N-acetyl-gamma-glutamyl-phosphate reductase (Escherichia coli O6:H1 (strain CFT073 / ATCC 700928 / UPEC)).